The chain runs to 481 residues: Replication factor C large subunit (481 aa).

43–50 (GKPGIGKT) is an ATP binding site. Basic and acidic residues-rich tracts occupy residues 408–433 (KVER…KDAD) and 441–457 (VPKE…ERPA). Positions 408 to 481 (KVEREKEPEP…HNQSTLFDGF (74 aa)) are disordered. Over residues 471–481 (AHNQSTLFDGF) the composition is skewed to polar residues.

It belongs to the activator 1 small subunits family. RfcL subfamily. In terms of assembly, heteromultimer composed of small subunits (RfcS) and large subunits (RfcL).

Functionally, part of the RFC clamp loader complex which loads the PCNA sliding clamp onto DNA. This is Replication factor C large subunit from Methanoregula boonei (strain DSM 21154 / JCM 14090 / 6A8).